A 1266-amino-acid chain; its full sequence is TBC1 domain family member 9 (1266 aa).

GRAM domains are found at residues 146–213 (VKFH…EKNA) and 293–361 (ERYR…EKAD). The tract at residues 415 to 456 (SYNSSDDEVYSRPSSLVSSSPQRSTSSDADGERQFNLNGNSV) is disordered. The span at 425-441 (SRPSSLVSSSPQRSTSS) shows a compositional bias: low complexity. A Rab-GAP TBC domain is found at 515-702 (GIPESMRGEL…VVVDCFFYEG (188 aa)). The 36-residue stretch at 886 to 921 (HSDVLASRLFQLLDENGDSLINFREFVSGLSAACHG) folds into the EF-hand domain. Disordered stretches follow at residues 1075 to 1095 (AKEG…PGVL) and 1132 to 1164 (DIKL…SMSS).

Its function is as follows. May act as a GTPase-activating protein for Rab family protein(s). This chain is TBC1 domain family member 9 (TBC1D9), found in Homo sapiens (Human).